Here is a 595-residue protein sequence, read N- to C-terminus: Probable carotenoid cleavage dioxygenase 4, chloroplastic (595 aa).

Residues 1–34 constitute a chloroplast transit peptide; the sequence is MDSVSSSSFLSSTFSLHHSLLRRRSSSPTLLRIN. Residues 41–74 are disordered; sequence RSPITNPSDNNDRRNKPKTLHNRTNHTLVSSPPK. The span at 55-64 shows a compositional bias: basic residues; sequence NKPKTLHNRT. His-287, His-336, His-404, and His-583 together coordinate Fe cation.

Belongs to the carotenoid oxygenase family. As to quaternary structure, interacts with VAR3. Interacts with PGM48. The cofactor is Fe(2+). As to expression, mostly expressed in flowers (e.g. sepals and petals), siliques, seeds, leaves and cotyledons.

The protein resides in the plastid. It localises to the chloroplast. The protein localises to the plastoglobule. Its function is as follows. May be involved in carotenoid cleavage. The chain is Probable carotenoid cleavage dioxygenase 4, chloroplastic (CCD4) from Arabidopsis thaliana (Mouse-ear cress).